The primary structure comprises 213 residues: Pyrrolidone-carboxylate peptidase (213 aa).

Residues E81, C144, and H166 contribute to the active site.

Belongs to the peptidase C15 family. In terms of assembly, homotetramer.

It is found in the cytoplasm. It carries out the reaction Release of an N-terminal pyroglutamyl group from a polypeptide, the second amino acid generally not being Pro.. Removes 5-oxoproline from various penultimate amino acid residues except L-proline. This is Pyrrolidone-carboxylate peptidase from Pseudomonas fluorescens (strain SBW25).